We begin with the raw amino-acid sequence, 743 residues long: Threonine synthase-like 1 (743 aa).

The residue at position 281 (lysine 281) is an N6-acetyllysine. An N6-(pyridoxal phosphate)lysine modification is found at lysine 351.

Belongs to the threonine synthase family. The cofactor is pyridoxal 5'-phosphate.

The protein is Threonine synthase-like 1 (THNSL1) of Homo sapiens (Human).